Reading from the N-terminus, the 436-residue chain is NAD(P)-dependent benzaldehyde dehydrogenase (436 aa).

NADP(+)-binding positions include 117–119 (GPF), 143–147 (KPSET), 175–178 (RDEN), 193–194 (GS), 215–216 (EL), cysteine 249, and 337–339 (ELF). Catalysis depends on residues glutamate 215 and cysteine 249.

The protein belongs to the aldehyde dehydrogenase family.

It carries out the reaction benzaldehyde + NAD(+) + H2O = benzoate + NADH + 2 H(+). The catalysed reaction is benzaldehyde + NADP(+) + H2O = benzoate + NADPH + 2 H(+). Its pathway is aromatic compound metabolism; (R)-mandelate degradation; benzoate from (R)-mandelate: step 4/4. NAD or NADP-dependent benzaldehyde dehydrogenase that catalyzes the conversion of benzaldehyde into benzoate in the (R)-mandelate degradation pathway. This is NAD(P)-dependent benzaldehyde dehydrogenase (mdlD) from Pseudomonas putida (Arthrobacter siderocapsulatus).